The following is a 667-amino-acid chain: Homeobox protein 3 (667 aa).

Disordered stretches follow at residues 44 to 108 (FFQP…NSSI), 179 to 232 (NNNN…TVYN), 249 to 268 (NNNN…VNNN), and 331 to 418 (STNK…YQKQ). Over residues 52-63 (LPPPTNQQPQPQ) the composition is skewed to pro residues. Positions 75–96 (CNSSFENSPQQPTSPLLISSQT) are enriched in polar residues. Residues 97-108 (SYPSDLSSNSSI) show a composition bias toward low complexity. The span at 334–343 (KRMKISHHSH) shows a compositional bias: basic residues. A compositionally biased stretch (low complexity) spans 344-379 (SLSNNNENSLSQPYFNNNNNNNNENENVYNIVNEQN). The segment covering 380–390 (PTFNPNQSNTH) has biased composition (polar residues). A coiled-coil region spans residues 386–454 (QSNTHQQQEE…ENENVICSEF (69 aa)). A DNA-binding region (homeobox) is located at residues 602–664 (EFKSRRILSE…NKRMRDKSNK (63 aa)).

The protein resides in the nucleus. Putative transcription factor. This chain is Homeobox protein 3 (hbx3), found in Dictyostelium discoideum (Social amoeba).